A 181-amino-acid polypeptide reads, in one-letter code: Histone deacetylase complex subunit SAP30L-A (181 aa).

Cystine bridges form between Cys26/Cys27 and Cys35/Cys71. The segment at 26–74 (CCLIDGGERCPRPAGNASFSKRVQKSISQKKLKLDIDKNVRHLYICDFH) adopts an Atypical zinc-finger fold. Positions 82 to 103 (RNKRKRKTSDDGGDSPEHETDI) are disordered. Positions 83-88 (NKRKRK) match the Nuclear localization signal (NLS) motif. The tract at residues 85 to 87 (RKR) is important for DNA and phosphoinositide binding.

This sequence belongs to the SAP30 family. Interacts with components of the histone deacetylase complex sin3a, hdac1 and hdac2. Binds histones and nucleosomes.

The protein localises to the nucleus. It localises to the nucleolus. In terms of biological role, functions as a transcription repressor, probably via its interaction with histone deacetylase complexes. Involved in the functional recruitment of the class 1 Sin3-histone deacetylase complex (HDAC) to the nucleolus. Binds DNA, apparently without sequence-specificity, and bends bound double-stranded DNA. Binds phosphoinositol phosphates (phosphoinositol 3-phosphate, phosphoinositol 4-phosphate and phosphoinositol 5-phosphate) via the same basic sequence motif that mediates DNA binding and nuclear import. This chain is Histone deacetylase complex subunit SAP30L-A (sap30l-a), found in Xenopus laevis (African clawed frog).